Consider the following 346-residue polypeptide: MSGKITDFFEKKTTTTIDEAENKDNDKELTSTTTTTTTTSTTSKKKVAAAPKKKAAVASKKRKHESSDEETDKEEQQNDDDDDGEEKVENNNNNKKLKNEEKSEEINSTITDNNYYDDIENYFTDKQWKEALSGEFGKAYFKKMITQLNKRYSSKEKPIYPPKNEIFSAFNYAHLEDVKVVIIGQDPYHGKGQAHGLSFSVKKGVSPPPSLINIYKELETDIEGFKRPLKNGFLEPWARQGVFLLNAVLTVEEATPNSHKDFGWADFTDAVLKILSKQDQPIVFILWGGFAQKKEKLFTNKNHLVLKSGHPSPLSIKHFIGCKHFSKSNEFLKSKGIEEIDWKITE.

Residues 1–105 (MSGKITDFFE…KLKNEEKSEE (105 aa)) are disordered. The span at 20–29 (AENKDNDKEL) shows a compositional bias: basic and acidic residues. The segment covering 30-42 (TSTTTTTTTTSTT) has biased composition (low complexity). The segment covering 43-64 (SKKKVAAAPKKKAAVASKKRKH) has biased composition (basic residues). The segment covering 67–86 (SDEETDKEEQQNDDDDDGEE) has biased composition (acidic residues). Asp186 acts as the Proton acceptor in catalysis.

The protein belongs to the uracil-DNA glycosylase (UDG) superfamily. UNG family.

The protein localises to the mitochondrion. It is found in the nucleus. It catalyses the reaction Hydrolyzes single-stranded DNA or mismatched double-stranded DNA and polynucleotides, releasing free uracil.. Excises uracil residues from the DNA which can arise as a result of misincorporation of dUMP residues by DNA polymerase or due to deamination of cytosine. This is Uracil-DNA glycosylase (uglA) from Dictyostelium discoideum (Social amoeba).